Consider the following 243-residue polypeptide: Endochitinase (243 aa).

3 cysteine pairs are disulfide-bonded: C23-C85, C97-C105, and C223-C236. E67 serves as the catalytic Proton donor.

Its subcellular location is the vacuole. It catalyses the reaction Random endo-hydrolysis of N-acetyl-beta-D-glucosaminide (1-&gt;4)-beta-linkages in chitin and chitodextrins.. Functionally, defense against chitin-containing fungal pathogens. Shows activity on chitin, tetra-N-acetylglucosamine and chitosan. This Carica papaya (Papaya) protein is Endochitinase.